The following is an 874-amino-acid chain: S-layer protein (874 aa).

The first 30 residues, 1-30 (MAKTNSYKKVIAGTMTAAMVAGVVSPVAAA), serve as a signal peptide directing secretion. SLH domains follow at residues 31–93 (GKSF…NAQP), 94–151 (SFKD…KVDG), and 152–214 (TLVT…ENSD).

The protein resides in the secreted. The protein localises to the cell wall. It localises to the S-layer. Functionally, the S-layer is a paracrystalline mono-layered assembly of proteins which coat the surface of bacteria. This is S-layer protein from Bacillus licheniformis.